A 190-amino-acid polypeptide reads, in one-letter code: Protein GrpE (190 aa).

Positions 1–41 are disordered; sequence MAKEKQEEQQKQTAPENEKAPKKDIKKEASDKKGDQTSKLK.

The protein belongs to the GrpE family. As to quaternary structure, homodimer.

Its subcellular location is the cytoplasm. Participates actively in the response to hyperosmotic and heat shock by preventing the aggregation of stress-denatured proteins, in association with DnaK and GrpE. It is the nucleotide exchange factor for DnaK and may function as a thermosensor. Unfolded proteins bind initially to DnaJ; upon interaction with the DnaJ-bound protein, DnaK hydrolyzes its bound ATP, resulting in the formation of a stable complex. GrpE releases ADP from DnaK; ATP binding to DnaK triggers the release of the substrate protein, thus completing the reaction cycle. Several rounds of ATP-dependent interactions between DnaJ, DnaK and GrpE are required for fully efficient folding. The sequence is that of Protein GrpE from Limosilactobacillus reuteri (strain DSM 20016) (Lactobacillus reuteri).